Here is a 328-residue protein sequence, read N- to C-terminus: Delta(3,5)-Delta(2,4)-dienoyl-CoA isomerase, mitochondrial (328 aa).

A mitochondrion-targeting transit peptide spans 1–33; the sequence is MAAGIVASRRLRDLLTRRLTGSNYPGLSISLRL. Residues 116 to 120 and G174 each bind substrate; that span reads AGIDL. K231 is modified (N6-succinyllysine). The residue at position 268 (S268) is a Phosphoserine. The Microbody targeting signal motif lies at 326 to 328; the sequence is SKL. An N6-acetyllysine modification is found at K327.

Belongs to the enoyl-CoA hydratase/isomerase family. In terms of assembly, homohexamer.

It localises to the mitochondrion. Its subcellular location is the peroxisome. The enzyme catalyses (3E,5Z)-octadienoyl-CoA = (2E,4E)-octadienoyl-CoA. The catalysed reaction is (3E,5Z,8Z,11Z,14Z)-eicosapentaenoyl-CoA = (2E,4E,8Z,11Z,14Z)-eicosapentaenoyl-CoA. It functions in the pathway lipid metabolism; fatty acid beta-oxidation. Its function is as follows. Isomerization of 3-trans,5-cis-dienoyl-CoA to 2-trans,4-trans-dienoyl-CoA. The polypeptide is Delta(3,5)-Delta(2,4)-dienoyl-CoA isomerase, mitochondrial (Homo sapiens (Human)).